The sequence spans 359 residues: Dihydroorotate dehydrogenase (quinone) (359 aa).

Residues 68–72 (AGFDK) and Thr92 each bind FMN. Lys72 contacts substrate. 117–121 (NRMGF) serves as a coordination point for substrate. Residues Asn145 and Asn176 each contribute to the FMN site. Residue Asn176 participates in substrate binding. The active-site Nucleophile is the Ser179. Substrate is bound at residue Asn181. The FMN site is built by Lys212 and Thr240. 241-242 (NT) serves as a coordination point for substrate. FMN is bound by residues Gly266, Gly295, and 316–317 (YT).

The protein belongs to the dihydroorotate dehydrogenase family. Type 2 subfamily. Monomer. FMN serves as cofactor.

It is found in the cell membrane. The enzyme catalyses (S)-dihydroorotate + a quinone = orotate + a quinol. The protein operates within pyrimidine metabolism; UMP biosynthesis via de novo pathway; orotate from (S)-dihydroorotate (quinone route): step 1/1. Functionally, catalyzes the conversion of dihydroorotate to orotate with quinone as electron acceptor. In Corynebacterium striatum, this protein is Dihydroorotate dehydrogenase (quinone).